The following is a 323-amino-acid chain: Olfactory receptor 51S1 (323 aa).

Over 1 to 33 the chain is Extracellular; it reads MSTLPTQIAPNSSTSMAPTFLLVGMPGLSGAPS. Asn-11 carries N-linked (GlcNAc...) asparagine glycosylation. Residues 34-54 form a helical membrane-spanning segment; the sequence is WWTLPLIAVYLLSALGNGTIL. Residues 55–62 are Cytoplasmic-facing; sequence WIIALQPA. A helical transmembrane segment spans residues 63-83; the sequence is LHRPMHFFLFLLSVSDIGLVT. Residues 84–107 lie on the Extracellular side of the membrane; that stretch reads ALMPTLLGIALAGAHTVPASACLL. Cys-105 and Cys-197 are disulfide-bonded. A helical membrane pass occupies residues 108–128; sequence QMVFIHVFSVMESSVLLAMSI. Residues 129–147 lie on the Cytoplasmic side of the membrane; the sequence is DRALAICRPLHYPALLTNG. A helical membrane pass occupies residues 148–168; sequence VISKISLAISFRCLGLHLPLP. Over 169–203 the chain is Extracellular; that stretch reads FLLAYMPYCLPQVLTHSYCLHPDVARLACPEAWGA. The chain crosses the membrane as a helical span at residues 204–224; the sequence is AYSLFVVLSAMGLDPLLIFFS. Residues 225–244 lie on the Cytoplasmic side of the membrane; it reads YGLIGKVLQGVESREDRWKA. The helical transmembrane segment at 245–265 threads the bilayer; that stretch reads GQTCAAHLSAVLLFYIPMILL. Residues 266 to 280 are Extracellular-facing; the sequence is ALINHPELPITQHTH. The chain crosses the membrane as a helical span at residues 281–301; sequence TLLSYVHFLLPPLINPILYSV. Residues 302-323 lie on the Cytoplasmic side of the membrane; sequence KMKEIRKRILNRLQPRKVGGAQ.

It belongs to the G-protein coupled receptor 1 family.

It is found in the cell membrane. Its function is as follows. Odorant receptor. This is Olfactory receptor 51S1 (OR51S1) from Homo sapiens (Human).